A 328-amino-acid polypeptide reads, in one-letter code: MSLQNLTRFPRLEFIGAPTPLEYLPRFSDYLGREIFIKRDDVTPLAMGGNKVRKLEFLAADALREGADTLVTAGAIQSNHVRQTAAVAAKLGLHCVALLENPIGTQAENYLSNGNRLLLDLFNVQVEMCAALDDPDAQLQELATRIEAQGFRPYVIPVGGSNALGALGYVESALEIAQQCEGAVNLSSVVVASGSAGTHAGLAVGLEHLLPETELIGVTVSRSVADQKPKVVALQQAVARELELSAAAEITLWDEYFAPGYGTPNEEGMEAVKLLARLEGILLDPVYTGKAMAGLIDGISQKRFKDQGPILFIHTGGAPALFAYHPHV.

Position 51 is an N6-(pyridoxal phosphate)lysine (Lys51).

This sequence belongs to the ACC deaminase/D-cysteine desulfhydrase family. As to quaternary structure, homodimer. Requires pyridoxal 5'-phosphate as cofactor.

It catalyses the reaction D-cysteine + H2O = hydrogen sulfide + pyruvate + NH4(+) + H(+). Catalyzes the alpha,beta-elimination reaction of D-cysteine and of several D-cysteine derivatives. It could be a defense mechanism against D-cysteine. The chain is D-cysteine desulfhydrase from Escherichia fergusonii (strain ATCC 35469 / DSM 13698 / CCUG 18766 / IAM 14443 / JCM 21226 / LMG 7866 / NBRC 102419 / NCTC 12128 / CDC 0568-73).